A 1019-amino-acid polypeptide reads, in one-letter code: Collagen alpha-2(VI) chain (1019 aa).

Residues 1 to 20 form the signal peptide; that stretch reads MLQGTCSVLLLWGILGAIQA. The interval 21-256 is nonhelical region; sequence QQQEVISPDT…YKVSCLEIPG (236 aa). The VWFA 1 domain occupies 46–234; it reads HVYFVLDTSE…EIDQDTINRI (189 aa). N-linked (GlcNAc...) asparagine glycosylation occurs at Asn-140. Residues 257–588 form a disordered region; it reads PSGPKGYRGQ…GEPGPPGDPG (332 aa). The triple-helical region stretch occupies residues 257–590; that stretch reads PSGPKGYRGQ…PGPPGDPGLT (334 aa). Residues 287-305 show a composition bias toward low complexity; it reads DPGIEGPIGFPGPKGVPGF. Over residues 306–318 the composition is skewed to basic and acidic residues; the sequence is KGEKGEFGADGRK. N-linked (GlcNAc...) asparagine glycosylation occurs at Asn-327. Composition is skewed to basic and acidic residues over residues 365 to 377 and 419 to 429; these read ERGDQGGKGDPGR and PKGEPGRRGDP. 5 consecutive short sequence motifs (cell attachment site) follow at residues 366–368, 426–428, 489–491, 498–500, and 539–541; these read RGD. Over residues 524 to 557 the composition is skewed to basic and acidic residues; sequence PGEKGEPGPRGPEGGRGDFGLKGEPGRKGEKGEP. Over residues 559–569 the composition is skewed to pro residues; the sequence is DPGPPGEPGPR. Residues 591–1019 are nonhelical region; sequence ECDVMTYVRE…FFDRFIRWIC (429 aa). 2 VWFA domains span residues 615 to 805 and 833 to 1014; these read DVVF…EDVL and DIVF…FDRF. Asn-630 is a glycosylation site (N-linked (GlcNAc...) asparagine). Position 701 is a phosphothreonine (Thr-701). Ser-705 is modified (phosphoserine). N-linked (GlcNAc...) asparagine glycans are attached at residues Asn-785, Asn-897, and Asn-954.

This sequence belongs to the type VI collagen family. Trimers composed of three different chains: alpha-1(VI), alpha-2(VI), and alpha-3(VI) or alpha-5(VI) or alpha-6(VI). Interacts with CSPG4. Post-translationally, prolines at the third position of the tripeptide repeating unit (G-X-Y) are hydroxylated in some or all of the chains.

The protein resides in the secreted. The protein localises to the extracellular space. Its subcellular location is the extracellular matrix. It localises to the membrane. Functionally, collagen VI acts as a cell-binding protein. The polypeptide is Collagen alpha-2(VI) chain (COL6A2) (Homo sapiens (Human)).